The chain runs to 297 residues: MGAQIRVYRQKISSTTSMRKIFKAMELIATSRIGKARARVAASLPYANAITRAVSAVASQSEIDHPLVTEPEQIRRAAVLVITSDRGLAGSYSASVLKQAEGLTELLREEGKEVKTYVVGRKAQAYFDFRNRPYAQVWTGNTDSPVFATAQEIGAALLEDFATAYEEGGVDEIHVVYTRFKSMVTQEPTVIRLLPLEVVEEQAASESDLLPLYEFEPETEQVLDALLPRYIESRIFAAMLQAAASELAARQRAMKSAGDNATDLIKKYTRLRNTARQAEITQELSEIVAGADALNAS.

It belongs to the ATPase gamma chain family. F-type ATPases have 2 components, CF(1) - the catalytic core - and CF(0) - the membrane proton channel. CF(1) has five subunits: alpha(3), beta(3), gamma(1), delta(1), epsilon(1). CF(0) has three main subunits: a, b and c.

It is found in the cell membrane. Functionally, produces ATP from ADP in the presence of a proton gradient across the membrane. The gamma chain is believed to be important in regulating ATPase activity and the flow of protons through the CF(0) complex. The protein is ATP synthase gamma chain of Arthrobacter sp. (strain FB24).